Here is a 473-residue protein sequence, read N- to C-terminus: Glutamate--tRNA ligase (473 aa).

A 'HIGH' region motif is present at residues proline 10–asparagine 20. The Zn(2+) site is built by cysteine 98, cysteine 100, cysteine 125, and histidine 127. Positions lysine 242 to arginine 246 match the 'KMSKS' region motif. Residue lysine 245 participates in ATP binding.

The protein belongs to the class-I aminoacyl-tRNA synthetase family. Glutamate--tRNA ligase type 1 subfamily. In terms of assembly, monomer. Requires Zn(2+) as cofactor.

The protein resides in the cytoplasm. It carries out the reaction tRNA(Glu) + L-glutamate + ATP = L-glutamyl-tRNA(Glu) + AMP + diphosphate. Functionally, catalyzes the attachment of glutamate to tRNA(Glu) in a two-step reaction: glutamate is first activated by ATP to form Glu-AMP and then transferred to the acceptor end of tRNA(Glu). This Aquifex aeolicus (strain VF5) protein is Glutamate--tRNA ligase.